Reading from the N-terminus, the 464-residue chain is Calcitonin gene-related peptide type 1 receptor (464 aa).

The first 23 residues, 1-23 (MMDKKCTLCFLFLLLLNMALIAA), serve as a signal peptide directing secretion. Over 24–139 (ESEEGANQTD…STHEKVKTAL (116 aa)) the chain is Extracellular. 6 N-linked (GlcNAc...) asparagine glycosylation sites follow: Asn30, Asn66, Asn118, Asn123, Asn128, and Asn129. Cystine bridges form between Cys48–Cys74, Cys65–Cys105, and Cys88–Cys127. Residues 140-164 (NLFYLTIIGHGLSIASLIISLIIFF) form a helical membrane-spanning segment. Over 165–175 (YFKSLSCQRIT) the chain is Cytoplasmic. The helical transmembrane segment at 176–198 (LHKNLFFSFVCNSIVTIIHLTAV) threads the bilayer. Over 199 to 209 (ANNQALVATNP) the chain is Extracellular. A helical transmembrane segment spans residues 210-238 (VSCKVSQFIHLYLMGCNYFWMLCEGIYLH). At 239–252 (TLIVVAVFAEKQHL) the chain is on the cytoplasmic side. The helical transmembrane segment at 253 to 273 (MWYYFLGWGFPLLPACIHAIA) threads the bilayer. The Extracellular segment spans residues 274-289 (RSLYYNDNCWISSDTH). The interval 288-289 (TH) is required for RAMP3 interaction. Residues 290 to 314 (LLYIIHGPICAALLVNLFFLLNIVR) form a helical membrane-spanning segment. The Cytoplasmic segment spans residues 315 to 329 (VLITKLKVTHQAESN). The chain crosses the membrane as a helical span at residues 330–351 (LYMKAVRATLILVPLLGIEFVL). Topologically, residues 352 to 366 (FPWRPEGKVAEEVYD) are extracellular. The helical transmembrane segment at 367–387 (YVMHILMHYQGLLVSTIFCFF) threads the bilayer. The Cytoplasmic segment spans residues 388 to 464 (NGEVQAILRR…KPEKMYDLVM (77 aa)). Phosphoserine is present on residues Ser420 and Ser445.

It belongs to the G-protein coupled receptor 2 family. In terms of assembly, heterodimer of CALCRL and RAMP1; the receptor complex functions as CGRP receptor. Heterodimer of CALCRL and RAMP2 or CALCRL and RAMP3; the complexes function as adrenomedullin receptor.

It localises to the cell membrane. Its function is as follows. G protein-coupled receptor which specificity is determined by its interaction with receptor-activity-modifying proteins (RAMPs). Together with RAMP1, form the receptor complex for calcitonin-gene-related peptides CALCA/CGRP1 and CALCB/CGRP2. Together with RAMP2 or RAMP3, function as receptor complexes for adrenomedullin (ADM and ADM2). Ligand binding causes a conformation change that triggers signaling via guanine nucleotide-binding proteins (G proteins) and modulates the activity of downstream effectors. Activates cAMP-dependent pathway. The polypeptide is Calcitonin gene-related peptide type 1 receptor (Rattus norvegicus (Rat)).